A 118-amino-acid polypeptide reads, in one-letter code: Small ribosomal subunit protein uS13 (118 aa).

The segment at 91–118 is disordered; that stretch reads HRRGLPVRGQRTKTNARTRKGPRKPIKK.

It belongs to the universal ribosomal protein uS13 family. Part of the 30S ribosomal subunit. Forms a loose heterodimer with protein S19. Forms two bridges to the 50S subunit in the 70S ribosome.

Its function is as follows. Located at the top of the head of the 30S subunit, it contacts several helices of the 16S rRNA. In the 70S ribosome it contacts the 23S rRNA (bridge B1a) and protein L5 of the 50S subunit (bridge B1b), connecting the 2 subunits; these bridges are implicated in subunit movement. Contacts the tRNAs in the A and P-sites. This Hamiltonella defensa subsp. Acyrthosiphon pisum (strain 5AT) protein is Small ribosomal subunit protein uS13.